An 88-amino-acid polypeptide reads, in one-letter code: Small ribosomal subunit protein uS15 (88 aa).

This sequence belongs to the universal ribosomal protein uS15 family. As to quaternary structure, part of the 30S ribosomal subunit. Forms a bridge to the 50S subunit in the 70S ribosome, contacting the 23S rRNA.

Functionally, one of the primary rRNA binding proteins, it binds directly to 16S rRNA where it helps nucleate assembly of the platform of the 30S subunit by binding and bridging several RNA helices of the 16S rRNA. Its function is as follows. Forms an intersubunit bridge (bridge B4) with the 23S rRNA of the 50S subunit in the ribosome. The sequence is that of Small ribosomal subunit protein uS15 from Borreliella burgdorferi (strain ATCC 35210 / DSM 4680 / CIP 102532 / B31) (Borrelia burgdorferi).